We begin with the raw amino-acid sequence, 250 residues long: Vacuolar protein sorting-associated protein 22 homolog 1 (250 aa).

The stretch at 35 to 55 (MKEQLSTFRSQLEEFARKHKN) forms a coiled coil.

Belongs to the SNF8 family. Component of the endosomal sorting complex required for transport II (ESCRT-II), composed of VPS22, VPS25 and VPS36.

It localises to the endosome. In terms of biological role, component of the endosomal sorting complex required for transport II (ESCRT-II), which is required for multivesicular body (MVB) formation and sorting of endosomal cargo proteins into MVBs. The ESCRT-II complex is probably involved in the recruitment of the ESCRT-III complex. The chain is Vacuolar protein sorting-associated protein 22 homolog 1 (VP22-1) from Arabidopsis thaliana (Mouse-ear cress).